A 153-amino-acid chain; its full sequence is Large ribosomal subunit protein uL30 (153 aa).

This sequence belongs to the universal ribosomal protein uL30 family. Part of the 50S ribosomal subunit.

The sequence is that of Large ribosomal subunit protein uL30 from Methanocorpusculum labreanum (strain ATCC 43576 / DSM 4855 / Z).